The following is a 367-amino-acid chain: Chorismate synthase (367 aa).

Arg-48 serves as a coordination point for NADP(+). FMN is bound by residues 125–127 (RSS), 243–244 (NA), Gly-283, 298–302 (KPTSS), and Arg-324.

This sequence belongs to the chorismate synthase family. Homotetramer. It depends on FMNH2 as a cofactor.

It carries out the reaction 5-O-(1-carboxyvinyl)-3-phosphoshikimate = chorismate + phosphate. It functions in the pathway metabolic intermediate biosynthesis; chorismate biosynthesis; chorismate from D-erythrose 4-phosphate and phosphoenolpyruvate: step 7/7. In terms of biological role, catalyzes the anti-1,4-elimination of the C-3 phosphate and the C-6 proR hydrogen from 5-enolpyruvylshikimate-3-phosphate (EPSP) to yield chorismate, which is the branch point compound that serves as the starting substrate for the three terminal pathways of aromatic amino acid biosynthesis. This reaction introduces a second double bond into the aromatic ring system. This Psychrobacter cryohalolentis (strain ATCC BAA-1226 / DSM 17306 / VKM B-2378 / K5) protein is Chorismate synthase.